A 221-amino-acid polypeptide reads, in one-letter code: Ribonuclease T (221 aa).

The 175-residue stretch at 21 to 195 folds into the Exonuclease domain; it reads VVIDIESAGF…YDTIQTAYLF (175 aa). 4 residues coordinate Mg(2+): D24, E26, H182, and D187. The Proton donor/acceptor role is filled by H182.

This sequence belongs to the RNase T family. In terms of assembly, homodimer. The cofactor is Mg(2+).

Its function is as follows. Trims short 3' overhangs of a variety of RNA species, leaving a one or two nucleotide 3' overhang. Responsible for the end-turnover of tRNA: specifically removes the terminal AMP residue from uncharged tRNA (tRNA-C-C-A). Also appears to be involved in tRNA biosynthesis. This is Ribonuclease T from Buchnera aphidicola subsp. Cinara cedri (strain Cc).